We begin with the raw amino-acid sequence, 219 residues long: Probable cutinase 4 (219 aa).

A signal peptide spans 1–17; it reads MILPSLLVASLSALAAA. Intrachain disulfides connect Cys41-Cys120 and Cys67-Cys81. A glycan (N-linked (GlcNAc...) asparagine) is linked at Asn99. The active-site Nucleophile is Ser131. A disulfide bridge links Cys182 with Cys189. Asp186 is a catalytic residue. Catalysis depends on His199, which acts as the Proton donor/acceptor.

It belongs to the cutinase family.

The protein resides in the secreted. The enzyme catalyses cutin + H2O = cutin monomers.. Functionally, catalyzes the hydrolysis of complex carboxylic polyesters found in the cell wall of plants. Degrades cutin, a macromolecule that forms the structure of the plant cuticle. In Aspergillus terreus (strain NIH 2624 / FGSC A1156), this protein is Probable cutinase 4.